Here is a 314-residue protein sequence, read N- to C-terminus: tRNA pseudouridine synthase B (314 aa).

Asp-47 serves as the catalytic Nucleophile.

The protein belongs to the pseudouridine synthase TruB family. Type 1 subfamily.

It carries out the reaction uridine(55) in tRNA = pseudouridine(55) in tRNA. In terms of biological role, responsible for synthesis of pseudouridine from uracil-55 in the psi GC loop of transfer RNAs. The protein is tRNA pseudouridine synthase B of Vibrio campbellii (strain ATCC BAA-1116).